The sequence spans 507 residues: Cytochrome P450 monooxygenase cloA (507 aa).

Residues 15–35 form a helical membrane-spanning segment; sequence WTWILLTTCIALTSPLVLKGI. A glycan (N-linked (GlcNAc...) asparagine) is linked at Asn247. Residue Cys450 coordinates heme.

Belongs to the cytochrome P450 family. Heme serves as cofactor.

Its subcellular location is the membrane. It participates in alkaloid biosynthesis; ergot alkaloid biosynthesis. Its function is as follows. Cytochrome P450 monooxygenase; part of the gene cluster that mediates the biosynthesis of fungal ergot alkaloid. DmaW catalyzes the first step of ergot alkaloid biosynthesis by condensing dimethylallyl diphosphate (DMAP) and tryptophan to form 4-dimethylallyl-L-tryptophan. The second step is catalyzed by the methyltransferase easF that methylates 4-dimethylallyl-L-tryptophan in the presence of S-adenosyl-L-methionine, resulting in the formation of 4-dimethylallyl-L-abrine. The catalase easC and the FAD-dependent oxidoreductase easE then transform 4-dimethylallyl-L-abrine to chanoclavine-I which is further oxidized by easD in the presence of NAD(+), resulting in the formation of chanoclavine-I aldehyde. Agroclavine dehydrogenase easG then mediates the conversion of chanoclavine-I aldehyde to agroclavine via a non-enzymatic adduct reaction: the substrate is an iminium intermediate that is formed spontaneously from chanoclavine-I aldehyde in the presence of glutathione. The presence of easA is not required to complete this reaction. Further conversion of agroclavine to paspalic acid is a two-step process involving oxidation of agroclavine to elymoclavine and of elymoclavine to paspalic acid, the second step being performed by the elymoclavine oxidase cloA. Paspalic acid is then further converted to D-lysergic acid. Ergopeptines are assembled from D-lysergic acid and three different amino acids by the D-lysergyl-peptide-synthetases composed each of a monomudular and a trimodular nonribosomal peptide synthetase subunit. LpsB and lpsC encode the monomodular subunits responsible for D-lysergic acid activation and incorporation into the ergopeptine backbone. LpsA1 and A2 subunits encode the trimodular nonribosomal peptide synthetase assembling the tripeptide portion of ergopeptines. LpsA1 is responsible for formation of the major ergopeptine, ergotamine, and lpsA2 for alpha-ergocryptine, the minor ergopeptine of the total alkaloid mixture elaborated by C.purpurea. D-lysergyl-tripeptides are assembled by the nonribosomal peptide synthetases and released as N-(D-lysergyl-aminoacyl)-lactams. Cyclolization of the D-lysergyl-tripeptides is performed by the Fe(2+)/2-ketoglutarate-dependent dioxygenase easH which introduces a hydroxyl group into N-(D-lysergyl-aminoacyl)-lactam at alpha-C of the aminoacyl residue followed by spontaneous condensation with the terminal lactam carbonyl group. The polypeptide is Cytochrome P450 monooxygenase cloA (Claviceps purpurea (Ergot fungus)).